A 270-amino-acid chain; its full sequence is Methylthioribulose-1-phosphate dehydratase (270 aa).

Substrate is bound at residue Cys122. Zn(2+) contacts are provided by His140 and His142. Glu165 acts as the Proton donor/acceptor in catalysis. His230 contacts Zn(2+).

The protein belongs to the aldolase class II family. MtnB subfamily. It depends on Zn(2+) as a cofactor.

Its subcellular location is the cytoplasm. It catalyses the reaction 5-(methylsulfanyl)-D-ribulose 1-phosphate = 5-methylsulfanyl-2,3-dioxopentyl phosphate + H2O. The protein operates within amino-acid biosynthesis; L-methionine biosynthesis via salvage pathway; L-methionine from S-methyl-5-thio-alpha-D-ribose 1-phosphate: step 2/6. In terms of biological role, catalyzes the dehydration of methylthioribulose-1-phosphate (MTRu-1-P) into 2,3-diketo-5-methylthiopentyl-1-phosphate (DK-MTP-1-P). The chain is Methylthioribulose-1-phosphate dehydratase from Candida albicans (strain SC5314 / ATCC MYA-2876) (Yeast).